A 252-amino-acid chain; its full sequence is MPYIDLNADLGEGFGIWQLGDDDAMLGIVTSANVACGFHAGEPAGLLRVCRAAAERGVRIGAQVGYRDLAGFGRRFIDVDPEDLVAEVVYQIGALQAIAQSCGSTVSYVKPHGALYNTIVTHRDQAAAVAEAVRMVDATLPVLGMTGSVFFQQATDLGLRTVAEAFADRAYRSDGQLVSRREHGAVLADAAAIAQRAVSMVASGKVTAVDGTQVPITMESICVHGDSPGAMQIATAVRDRLTAAGNEIRAFC.

The protein belongs to the LamB/PxpA family. In terms of assembly, forms a complex composed of PxpA, PxpB and PxpC.

The catalysed reaction is 5-oxo-L-proline + ATP + 2 H2O = L-glutamate + ADP + phosphate + H(+). Catalyzes the cleavage of 5-oxoproline to form L-glutamate coupled to the hydrolysis of ATP to ADP and inorganic phosphate. The chain is 5-oxoprolinase subunit A from Mycobacterium ulcerans (strain Agy99).